A 95-amino-acid polypeptide reads, in one-letter code: Co-chaperonin GroES (95 aa).

Belongs to the GroES chaperonin family. Heptamer of 7 subunits arranged in a ring. Interacts with the chaperonin GroEL.

The protein localises to the cytoplasm. Functionally, together with the chaperonin GroEL, plays an essential role in assisting protein folding. The GroEL-GroES system forms a nano-cage that allows encapsulation of the non-native substrate proteins and provides a physical environment optimized to promote and accelerate protein folding. GroES binds to the apical surface of the GroEL ring, thereby capping the opening of the GroEL channel. This chain is Co-chaperonin GroES, found in Chlorobium phaeobacteroides (strain DSM 266 / SMG 266 / 2430).